The following is a 298-amino-acid chain: uncharacterized protein (298 aa).

Transmembrane regions (helical) follow at residues 5-25, 36-56, 76-96, 97-117, 124-144, 147-167, 181-201, 216-236, 244-264, and 272-292; these read ILFG…MSAF, MENV…IYPF, VVVG…ISLA, TATA…PLLL, STLI…DPSV, VGPV…LAYI, VILA…FIDI, ILWI…LTYA, IIAP…LYLG, and SSLG…PALL. The EamA 1 domain occupies 17–141; sequence LCFGIMSAFV…GIVGVVLISD (125 aa). Residues 183–288 form the EamA 2 domain; sequence LAFAFGMSLL…ILCSGLLIAL (106 aa).

It belongs to the EamA transporter family.

Its subcellular location is the cell membrane. This is an uncharacterized protein from Helicobacter pylori (strain ATCC 700392 / 26695) (Campylobacter pylori).